The chain runs to 224 residues: ATP phosphoribosyltransferase (224 aa).

It belongs to the ATP phosphoribosyltransferase family. Short subfamily. As to quaternary structure, heteromultimer composed of HisG and HisZ subunits.

It localises to the cytoplasm. The enzyme catalyses 1-(5-phospho-beta-D-ribosyl)-ATP + diphosphate = 5-phospho-alpha-D-ribose 1-diphosphate + ATP. The protein operates within amino-acid biosynthesis; L-histidine biosynthesis; L-histidine from 5-phospho-alpha-D-ribose 1-diphosphate: step 1/9. Functionally, catalyzes the condensation of ATP and 5-phosphoribose 1-diphosphate to form N'-(5'-phosphoribosyl)-ATP (PR-ATP). Has a crucial role in the pathway because the rate of histidine biosynthesis seems to be controlled primarily by regulation of HisG enzymatic activity. The chain is ATP phosphoribosyltransferase from Cupriavidus taiwanensis (strain DSM 17343 / BCRC 17206 / CCUG 44338 / CIP 107171 / LMG 19424 / R1) (Ralstonia taiwanensis (strain LMG 19424)).